The following is a 154-amino-acid chain: 17.4 kDa class I heat shock protein (154 aa).

Positions 40–154 constitute a sHSP domain; that stretch reads DAAAFAGARI…PDVKSIQITG (115 aa).

Belongs to the small heat shock protein (HSP20) family. As to quaternary structure, may form oligomeric structures.

It is found in the cytoplasm. The polypeptide is 17.4 kDa class I heat shock protein (HSP17.4) (Oryza sativa subsp. japonica (Rice)).